Reading from the N-terminus, the 356-residue chain is Heparan sulfate 2-O-sulfotransferase 1 (356 aa).

Over 1-11 (MGLLRIMMPPK) the chain is Cytoplasmic. Residues 12–28 (LQLLAVLTFGVLMLFLE) traverse the membrane as a helical; Signal-anchor for type II membrane protein segment. A coiled-coil region spans residues 24–51 (MLFLENQIQNLEESREKLERAIARHEVR). Residues 29-356 (NQIQNLEESR…FYEKIYPKSN (328 aa)) lie on the Lumenal side of the membrane. K83, T84, A85, S86, T87, and S88 together coordinate adenosine 3',5'-bisphosphate. N108 and N127 each carry an N-linked (GlcNAc...) asparagine glycan. Residues H140 and H142 contribute to the active site. Adenosine 3',5'-bisphosphate contacts are provided by R164 and S172. 2 disulfide bridges follow: C201–C209 and C222–C228. Residues Y279, S285, T290, and K293 each contribute to the adenosine 3',5'-bisphosphate site.

This sequence belongs to the sulfotransferase 3 family. In terms of assembly, homotrimer.

The protein resides in the golgi apparatus membrane. Functionally, catalyzes the transfer of a sulfo group from 3'-phospho-5'-adenylyl sulfate (PAPS) to the 2-OH position of iduronic acid (IdoA) or glucuronic acid (GlcA) within the heparan sulfate (HS) chain and participates in HS biosynthesis. The protein is Heparan sulfate 2-O-sulfotransferase 1 of Xenopus laevis (African clawed frog).